The following is a 388-amino-acid chain: MVVWPMDRTCAWALPEQYAEFRQRATLVPAKVWDGSPTWLVSRYEHVRALLVDPRVTVDPTRQPRLSEADGDGDGFRSMLMLDPPEHTRLRRMFISAFSVRQVETMRPEIEKIVDGILDRLLALEPPVDILTHLALPMSTQVICHLLGVPYEDREFFQERSELASRPNDDRSMPALIELVEYLDGLVRTKTAHPDTGLLGTAVTERLLKGEITHQELVNNAVLLLAAGHETSANQVTLSVLTLLRHPETAAELREQPELMPNAVDELLRYHSIADGLRRAATADIVLGDHTIRAGDGLIILLSSANHDGNTFGAEATFDIHRPARHHVAFGYGPHQCLGQNLARLEMEVTLGKLFRRVPALRLAQEPDALRVRQGSPIFGIDELLVEW.

Positions 87, 91, 279, 335, and 337 each coordinate heme.

This sequence belongs to the cytochrome P450 family. Heme is required as a cofactor.

The protein operates within antibiotic biosynthesis; mycinamicin biosynthesis. Involved in the biosynthesis of mycinamicin, a 16-membered macrolide antibiotic. Catalyzes hydroxylation at the C21 methyl group of mycinamicin VIII, the earliest macrolide form in the postpolyketide synthase tailoring pathway, leading to mycinamicin VII. Uses ferredoxin MycCII in electron transfer for catalysis. This is Mycinamicin VIII C21 methyl hydroxylase from Micromonospora griseorubida.